The sequence spans 177 residues: Adenine phosphoribosyltransferase (177 aa).

This sequence belongs to the purine/pyrimidine phosphoribosyltransferase family. Homodimer.

The protein resides in the cytoplasm. The enzyme catalyses AMP + diphosphate = 5-phospho-alpha-D-ribose 1-diphosphate + adenine. It participates in purine metabolism; AMP biosynthesis via salvage pathway; AMP from adenine: step 1/1. Catalyzes a salvage reaction resulting in the formation of AMP, that is energically less costly than de novo synthesis. The chain is Adenine phosphoribosyltransferase from Leptospira borgpetersenii serovar Hardjo-bovis (strain JB197).